Consider the following 374-residue polypeptide: S-adenosylmethionine:tRNA ribosyltransferase-isomerase (374 aa).

This sequence belongs to the QueA family. As to quaternary structure, monomer.

It is found in the cytoplasm. It carries out the reaction 7-aminomethyl-7-carbaguanosine(34) in tRNA + S-adenosyl-L-methionine = epoxyqueuosine(34) in tRNA + adenine + L-methionine + 2 H(+). It participates in tRNA modification; tRNA-queuosine biosynthesis. Functionally, transfers and isomerizes the ribose moiety from AdoMet to the 7-aminomethyl group of 7-deazaguanine (preQ1-tRNA) to give epoxyqueuosine (oQ-tRNA). In Sorangium cellulosum (strain So ce56) (Polyangium cellulosum (strain So ce56)), this protein is S-adenosylmethionine:tRNA ribosyltransferase-isomerase.